Consider the following 293-residue polypeptide: Histamine N-methyltransferase B (293 aa).

Residue E28 coordinates substrate. Positions 60, 89, 94, 120, and 142 each coordinate S-adenosyl-L-methionine. N283 is a binding site for substrate.

It belongs to the class I-like SAM-binding methyltransferase superfamily. HNMT family. Monomer.

The protein resides in the cytoplasm. The catalysed reaction is histamine + S-adenosyl-L-methionine = N(tau)-methylhistamine + S-adenosyl-L-homocysteine + H(+). Its function is as follows. Inactivates histamine by N-methylation. Plays an important role in degrading histamine and in regulating the airway response to histamine. The protein is Histamine N-methyltransferase B (hnmt-b) of Xenopus laevis (African clawed frog).